A 222-amino-acid chain; its full sequence is Large ribosomal subunit protein bL20 (222 aa).

Belongs to the bacterial ribosomal protein bL20 family.

Binds directly to 23S ribosomal RNA and is necessary for the in vitro assembly process of the 50S ribosomal subunit. It is not involved in the protein synthesizing functions of that subunit. This is Large ribosomal subunit protein bL20 (rplT) from Paenarthrobacter aurescens (strain TC1).